The following is a 261-amino-acid chain: [LysW]-aminoadipate/[LysW]-glutamate kinase (261 aa).

Substrate-binding positions include 35 to 36 (GG), R62, and N166.

It belongs to the acetylglutamate kinase family. LysZ subfamily.

It localises to the cytoplasm. It carries out the reaction [amino-group carrier protein]-C-terminal-N-(1,4-dicarboxybutan-1-yl)-L-glutamine + ATP = [amino-group carrier protein]-C-terminal-N-(1-carboxy-5-phosphooxy-5-oxopentan-1-yl)-L-glutamine + ADP. The catalysed reaction is [amino-group carrier protein]-C-terminal-gamma-(L-glutamyl)-L-glutamate + ATP = [amino-group carrier protein]-C-terminal-gamma-(5-phospho-L-glutamyl)-L-glutamate + ADP. Its pathway is amino-acid biosynthesis; L-lysine biosynthesis via AAA pathway; L-lysine from L-alpha-aminoadipate (Thermus route): step 2/5. It functions in the pathway amino-acid biosynthesis; L-arginine biosynthesis. Involved in both the arginine and lysine biosynthetic pathways. Phosphorylates the LysW-bound precursors glutamate (for arginine biosynthesis), respectively alpha-aminoadipate (for lysine biosynthesis). This is [LysW]-aminoadipate/[LysW]-glutamate kinase from Sulfurisphaera tokodaii (strain DSM 16993 / JCM 10545 / NBRC 100140 / 7) (Sulfolobus tokodaii).